The chain runs to 332 residues: Probable allantoicase (332 aa).

Belongs to the allantoicase family.

The catalysed reaction is allantoate + H2O = (S)-ureidoglycolate + urea. The protein operates within nitrogen metabolism; (S)-allantoin degradation; (S)-ureidoglycolate from allantoate (aminidohydrolase route): step 1/1. The protein is Probable allantoicase of Pseudomonas aeruginosa (strain LESB58).